We begin with the raw amino-acid sequence, 185 residues long: CASP-like protein 2C3 (185 aa).

Over 1-13 (MAAAARVSEVKAE) the chain is Cytoplasmic. A helical membrane pass occupies residues 14–34 (GLLRGACAALAAAAALLVGLS). The Extracellular segment spans residues 35 to 53 (TQTETVLLVRKKATVKDVQ). The chain crosses the membrane as a helical span at residues 54 to 74 (ALWVLAMAAAAAAGYHLLQLL). Residues 75 to 104 (KCLYLGRVGGARPCRRSSRALAWTCLLLDK) are Cytoplasmic-facing. A helical transmembrane segment spans residues 105–125 (ACAYTTFATTVAAAQACVVAL). Topologically, residues 126–146 (DGAHAVQWTKLCNIYTRFCEQ) are extracellular. A helical membrane pass occupies residues 147 to 167 (VAGSLVLGMLAAVGTAVLSAA). Residues 168 to 185 (SARNVFRHYSSLETYAAH) lie on the Cytoplasmic side of the membrane.

It belongs to the Casparian strip membrane proteins (CASP) family. In terms of assembly, homodimer and heterodimers.

It localises to the cell membrane. The polypeptide is CASP-like protein 2C3 (Zea mays (Maize)).